Consider the following 435-residue polypeptide: Adenylosuccinate synthetase (435 aa).

GTP contacts are provided by residues 11 to 17 (GDEGKGK) and 39 to 41 (GHT). Residue D12 is the Proton acceptor of the active site. Mg(2+) is bound by residues D12 and G39. IMP is bound by residues 12–15 (DEGK), 37–40 (NAGH), T128, R142, Q223, T238, and R302. H40 serves as the catalytic Proton donor. 298-304 (SVTGRPR) serves as a coordination point for substrate. Residues R304, 330-332 (KLD), and 412-414 (STG) contribute to the GTP site.

This sequence belongs to the adenylosuccinate synthetase family. In terms of assembly, homodimer. Mg(2+) serves as cofactor.

Its subcellular location is the cytoplasm. It catalyses the reaction IMP + L-aspartate + GTP = N(6)-(1,2-dicarboxyethyl)-AMP + GDP + phosphate + 2 H(+). The protein operates within purine metabolism; AMP biosynthesis via de novo pathway; AMP from IMP: step 1/2. Functionally, plays an important role in the de novo pathway of purine nucleotide biosynthesis. Catalyzes the first committed step in the biosynthesis of AMP from IMP. The sequence is that of Adenylosuccinate synthetase from Coxiella burnetii (strain CbuK_Q154) (Coxiella burnetii (strain Q154)).